A 156-amino-acid polypeptide reads, in one-letter code: Envelope glycoprotein L (156 aa).

Positions 1–16 (MSPLVAVLVFFSAALG) are cleaved as a signal peptide. In terms of domain architecture, gL alphaherpesvirus-type spans 50-156 (ELEWDDEDHP…LRYNGGPPAE (107 aa)). Cysteine 71 and cysteine 95 are oxidised to a cystine.

It belongs to the herpesviridae glycoprotein L (gL) family. Alphaherpesvirinae gL subfamily. As to quaternary structure, interacts with glycoprotein H (gH); this interaction is necessary for the correct processing and cell surface expression of gH. The heterodimer gH/gL seems to interact with gB trimers during fusion. Post-translationally, O-glycosylated, and sialylated.

It localises to the virion membrane. Its subcellular location is the host cell membrane. It is found in the host Golgi apparatus. The protein resides in the host trans-Golgi network. The heterodimer glycoprotein H-glycoprotein L is required for the fusion of viral and plasma membranes leading to virus entry into the host cell. Acts as a functional inhibitor of gH and maintains gH in an inhibited form. Upon binding to host integrins, gL dissociates from gH leading to activation of the viral fusion glycoproteins gB and gH. In Suid herpesvirus 1 (strain Indiana-Funkhauser / Becker) (SuHV-1), this protein is Envelope glycoprotein L.